The primary structure comprises 625 residues: tRNA uridine 5-carboxymethylaminomethyl modification enzyme MnmG (625 aa).

FAD is bound by residues Gly-13–Gly-18, Val-125, and Ser-182. An NAD(+)-binding site is contributed by Gly-276 to Phe-290. Gln-373 provides a ligand contact to FAD.

It belongs to the MnmG family. Homodimer. Heterotetramer of two MnmE and two MnmG subunits. The cofactor is FAD.

The protein localises to the cytoplasm. Its function is as follows. NAD-binding protein involved in the addition of a carboxymethylaminomethyl (cmnm) group at the wobble position (U34) of certain tRNAs, forming tRNA-cmnm(5)s(2)U34. This chain is tRNA uridine 5-carboxymethylaminomethyl modification enzyme MnmG, found in Lactococcus lactis subsp. lactis (strain IL1403) (Streptococcus lactis).